The sequence spans 608 residues: Glutamine--fructose-6-phosphate aminotransferase [isomerizing] (608 aa).

Cys2 functions as the Nucleophile; for GATase activity in the catalytic mechanism. One can recognise a Glutamine amidotransferase type-2 domain in the interval 2–217 (CGIVGILGRE…DGDWVVLTRN (216 aa)). SIS domains are found at residues 284–423 (LPFD…ARGE) and 456–598 (LARE…VDQP). The For Fru-6P isomerization activity role is filled by Lys603.

Homodimer.

Its subcellular location is the cytoplasm. It carries out the reaction D-fructose 6-phosphate + L-glutamine = D-glucosamine 6-phosphate + L-glutamate. Functionally, catalyzes the first step in hexosamine metabolism, converting fructose-6P into glucosamine-6P using glutamine as a nitrogen source. This Bradyrhizobium diazoefficiens (strain JCM 10833 / BCRC 13528 / IAM 13628 / NBRC 14792 / USDA 110) protein is Glutamine--fructose-6-phosphate aminotransferase [isomerizing] (glmS).